Consider the following 339-residue polypeptide: Quinolinate synthase (339 aa).

Positions 63 and 81 each coordinate iminosuccinate. Cys126 contributes to the [4Fe-4S] cluster binding site. Iminosuccinate-binding positions include 152–154 (YVN) and Ser169. Residue Cys211 participates in [4Fe-4S] cluster binding. Iminosuccinate contacts are provided by residues 237–239 (HPE) and Thr254. Residue Cys297 participates in [4Fe-4S] cluster binding.

Belongs to the quinolinate synthase family. Type 2 subfamily. It depends on [4Fe-4S] cluster as a cofactor.

Its subcellular location is the cytoplasm. It catalyses the reaction iminosuccinate + dihydroxyacetone phosphate = quinolinate + phosphate + 2 H2O + H(+). It functions in the pathway cofactor biosynthesis; NAD(+) biosynthesis; quinolinate from iminoaspartate: step 1/1. In terms of biological role, catalyzes the condensation of iminoaspartate with dihydroxyacetone phosphate to form quinolinate. The sequence is that of Quinolinate synthase from Xylella fastidiosa (strain 9a5c).